A 457-amino-acid polypeptide reads, in one-letter code: Multidrug resistance protein MdtK (457 aa).

12 consecutive transmembrane segments (helical) span residues 11 to 31 (LLALAIPVVIAQLSQTAMGVV), 46 to 66 (AVAVGTSIWLPAILFGHGLLL), 93 to 113 (WLAFCVSVLIMVVIYNSDHII), 127 to 147 (AVGFLHAIMWGAPGYLFFQVL), 160 to 180 (GMVIGFIGLLVNIPINYIFIY), 188 to 208 (LGGVGCGVATGTVYWVMFLMM), 243 to 263 (LPVALALFFEVTLFAVVALLV), 278 to 300 (LNFSSLMFMLPMSLSVAATIRVG), 316 to 336 (YTSIAVGLMLACVTAIFTVVF), 350 to 370 (VVVMASHLMLLAALYQLSDAI), 387 to 407 (IFFITFTAYWLLGLPSGYLLG), and 418 to 438 (PSGFWIGFVIGLTSAAILMAL).

It belongs to the multi antimicrobial extrusion (MATE) (TC 2.A.66.1) family. MdtK subfamily.

It is found in the cell inner membrane. Functionally, multidrug efflux pump that functions probably as a Na(+)/drug antiporter. This chain is Multidrug resistance protein MdtK, found in Yersinia enterocolitica serotype O:8 / biotype 1B (strain NCTC 13174 / 8081).